Consider the following 445-residue polypeptide: MGIIVLKNEGLNFHARISTPLSEIDDDIQKELLDLTKKVKVAGFRAGKVPVSIVKKKYGTSVRHDIIEKRINNLVNHIIKEYNLNIIGRPKIEELQNEPDKDLEFTVKIELLPKITIPDLKKISLDRPKLAVNSQDVEIQLEKLAALTKCYTKESKTKIKDGDQVTIDAIGYIKDRAFDGGKLNDFKVVIGSNTLIQGFEQQLIGSKTGNEVDVNVTFPENYHDKNLSGKDAHFVVQIKAVHTAEPTIIDEEFAKKFQSNSLEELRTHFAKQIENESEEAINTIMKMNLFDKLEKLLDFDVPESLLEQEKNILKSETDKNKHDGSLLNGKSSKEITEYYNKLALRRVRIGLLLAEYAKFKNLQLEPDDFKKIIMQQARNFPGQENMIFDFYKNNPRAIEGLKGPALEDKTVQYIFNNEIQLKEKRYTKEELEKYLETEEQRISLI.

One can recognise a PPIase FKBP-type domain in the interval 162–247 (GDQVTIDAIG…IKAVHTAEPT (86 aa)).

Belongs to the FKBP-type PPIase family. Tig subfamily.

The protein resides in the cytoplasm. The enzyme catalyses [protein]-peptidylproline (omega=180) = [protein]-peptidylproline (omega=0). In terms of biological role, involved in protein export. Acts as a chaperone by maintaining the newly synthesized protein in an open conformation. Functions as a peptidyl-prolyl cis-trans isomerase. The sequence is that of Trigger factor (tig) from Rickettsia prowazekii (strain Madrid E).